We begin with the raw amino-acid sequence, 432 residues long: Metacaspase-1 (432 aa).

The span at 1 to 11 (MEVMDHHHHTS) shows a compositional bias: basic residues. Disordered regions lie at residues 1 to 21 (MEVM…TTRR) and 41 to 87 (PQPG…PNAP). Residues 12–21 (STRPNPTTRR) show a composition bias toward low complexity. Pro residues predominate over residues 46–74 (GAPPPQGGYGYPQPPPPQQPYGYSQPPPQ). Active-site residues include His223 and Cys279.

Belongs to the peptidase C14B family.

Involved in cell death (apoptosis). The sequence is that of Metacaspase-1 (casA) from Sclerotinia sclerotiorum (strain ATCC 18683 / 1980 / Ss-1) (White mold).